A 220-amino-acid chain; its full sequence is Translation initiation factor IF-3 (220 aa).

Residues 182 to 220 (TPLVKKDDKEEPATRAVRTITAPPRPTSARLASKPAGNG) are disordered. The segment covering 185-194 (VKKDDKEEPA) has biased composition (basic and acidic residues).

It belongs to the IF-3 family. In terms of assembly, monomer.

Its subcellular location is the cytoplasm. IF-3 binds to the 30S ribosomal subunit and shifts the equilibrium between 70S ribosomes and their 50S and 30S subunits in favor of the free subunits, thus enhancing the availability of 30S subunits on which protein synthesis initiation begins. This is Translation initiation factor IF-3 from Synechococcus sp. (strain WH7803).